The chain runs to 518 residues: Glutamate--cysteine ligase (518 aa).

Belongs to the glutamate--cysteine ligase type 1 family. Type 1 subfamily.

The enzyme catalyses L-cysteine + L-glutamate + ATP = gamma-L-glutamyl-L-cysteine + ADP + phosphate + H(+). Its pathway is sulfur metabolism; glutathione biosynthesis; glutathione from L-cysteine and L-glutamate: step 1/2. This chain is Glutamate--cysteine ligase, found in Salmonella gallinarum (strain 287/91 / NCTC 13346).